A 376-amino-acid polypeptide reads, in one-letter code: UDP-N-acetylglucosamine 2-epimerase (376 aa).

Residues Arg10, Lys15, Asp95, Glu117, His213, Gln271, Phe276, 290-292 (SGG), Glu296, and Arg313 each bind substrate.

This sequence belongs to the UDP-N-acetylglucosamine 2-epimerase family. In terms of assembly, homodimer.

It is found in the cytoplasm. It catalyses the reaction UDP-N-acetyl-alpha-D-glucosamine = UDP-N-acetyl-alpha-D-mannosamine. It participates in bacterial outer membrane biogenesis; enterobacterial common antigen biosynthesis. Its activity is regulated as follows. Allosterically activated by its substrate, UDP-GlcNAc. Its function is as follows. Catalyzes the reversible epimerization at C-2 of UDP-N-acetylglucosamine (UDP-GlcNAc) and thereby provides bacteria with UDP-N-acetylmannosamine (UDP-ManNAc), the activated donor of ManNAc residues. Also involved in bacteriophage N4 adsorption. This chain is UDP-N-acetylglucosamine 2-epimerase, found in Escherichia coli (strain K12).